Reading from the N-terminus, the 305-residue chain is Phosphoribosylaminoimidazole-succinocarboxamide synthase (305 aa).

This sequence belongs to the SAICAR synthetase family.

It carries out the reaction 5-amino-1-(5-phospho-D-ribosyl)imidazole-4-carboxylate + L-aspartate + ATP = (2S)-2-[5-amino-1-(5-phospho-beta-D-ribosyl)imidazole-4-carboxamido]succinate + ADP + phosphate + 2 H(+). It functions in the pathway purine metabolism; IMP biosynthesis via de novo pathway; 5-amino-1-(5-phospho-D-ribosyl)imidazole-4-carboxamide from 5-amino-1-(5-phospho-D-ribosyl)imidazole-4-carboxylate: step 1/2. The chain is Phosphoribosylaminoimidazole-succinocarboxamide synthase from Albidiferax ferrireducens (strain ATCC BAA-621 / DSM 15236 / T118) (Rhodoferax ferrireducens).